A 204-amino-acid chain; its full sequence is Transcription initiation factor TFIID subunit 11b (204 aa).

The disordered stretch occupies residues 38–60 (PFEAAMEEQEESPVETEQTLEGD). The segment covering 42 to 58 (AMEEQEESPVETEQTLE) has biased composition (acidic residues). Residues 106–195 (FTEEQMSRYE…RRLKLQGKVP (90 aa)) form the Histone-fold domain.

It belongs to the TAF11 family. Component of the TFIID complex. TFIID is composed of TATA binding protein (TBP) and a number of TBP-associated factors (TAFs) whose MWs range from 14-217 kDa. In terms of tissue distribution, expressed in roots, leaves and inflorescences.

It localises to the nucleus. Functionally, TAFs are components of the transcription factor IID (TFIID) complex that is essential for mediating regulation of RNA polymerase transcription. This Arabidopsis thaliana (Mouse-ear cress) protein is Transcription initiation factor TFIID subunit 11b (TAF11B).